The sequence spans 221 residues: DELTA-actitoxin-Ucs1a (221 aa).

The signal sequence occupies residues 1 to 19 (MNRLIVLCLFVAMIYATIA). Residues 20-42 (LPKKEDISNDERSISVSKVPVKK) constitute a propeptide that is removed on maturation. The tract at residues 45–54 (AIAGAVIEGA) is plays an important role in the hemolytic activity. An N-terminal region region spans residues 53 to 72 (GAKLTFGILEKILTVLGDIN). Phosphocholine is bound by residues Ser-96, Val-129, Ser-147, Pro-149, Tyr-175, Tyr-179, and Tyr-180. A trp-rich region, which is important for the binding to lipid membrane region spans residues 147–162 (SVPYDYNLYSNWWNIK). The short motif at 186–188 (KGD) is the Cell attachment site, crucial for protein stability element.

It belongs to the actinoporin family. Sea anemone subfamily. In terms of assembly, octamer or nonamer in membranes. Monomer in the soluble state.

Its subcellular location is the secreted. It localises to the nematocyst. The protein resides in the target cell membrane. In terms of biological role, pore-forming protein that forms cations-selective hydrophilic pores of around 1 nm and causes cytolysis. Pore formation is a multi-step process that involves specific recognition of membrane sphingomyelin (but neither cholesterol nor phosphatidylcholine) using aromatic rich region and adjacent phosphocholine (POC) binding site, firm binding to the membrane (mainly driven by hydrophobic interactions) accompanied by the transfer of the N-terminal region to the lipid-water interface and finally pore formation after oligomerization of monomers. The chain is DELTA-actitoxin-Ucs1a from Urticina crassicornis (Mottled anemone).